Consider the following 681-residue polypeptide: Spermatogenesis-associated protein 21 (681 aa).

Over residues 1 to 14 (MENRNTHTHPESKA) the composition is skewed to basic and acidic residues. 2 disordered regions span residues 1 to 284 (MENR…ANSR) and 298 to 336 (EEAT…VPTL). Polar residues-rich tracts occupy residues 83-94 (QEPSARPRTTQD) and 159-173 (PSNS…NSPS). Residues 251–261 (PEERDTEKKEL) show a composition bias toward basic and acidic residues. Over residues 264 to 281 (GQKQRQQALSAAGTQGPA) the composition is skewed to polar residues. The span at 319–335 (TVTSVSTSGPISSSVPT) shows a compositional bias: low complexity. One can recognise an EF-hand domain in the interval 464-499 (FTPAQVEEALMSADVNGDGHVDFKDFLAVMTDTKRF). Ca(2+) is bound by residues Asp477, Asn479, Asp481, His483, and Asp488. Residues 653 to 681 (LFFQPGQQGSREHSSDSRKWLSSMPARTH) form a disordered region. Residues 662 to 671 (SREHSSDSRK) show a composition bias toward basic and acidic residues.

Its function is as follows. Involved in the differentiation of haploid spermatids. This chain is Spermatogenesis-associated protein 21 (Spata21), found in Mus musculus (Mouse).